We begin with the raw amino-acid sequence, 436 residues long: Ribulose bisphosphate carboxylase large chain (436 aa).

Substrate contacts are provided by Asn104 and Thr154. Lys156 (proton acceptor) is an active-site residue. Lys158 contacts substrate. Mg(2+) is bound by residues Lys182, Asp184, and Glu185. The residue at position 182 (Lys182) is an N6-carboxylysine. The active-site Proton acceptor is the His275. Substrate is bound by residues Arg276, His308, and Ser360.

Belongs to the RuBisCO large chain family. Type I subfamily. In terms of assembly, heterohexadecamer of 8 large chains and 8 small chains. It depends on Mg(2+) as a cofactor.

It is found in the plastid. The protein localises to the chloroplast. It carries out the reaction 2 (2R)-3-phosphoglycerate + 2 H(+) = D-ribulose 1,5-bisphosphate + CO2 + H2O. The enzyme catalyses D-ribulose 1,5-bisphosphate + O2 = 2-phosphoglycolate + (2R)-3-phosphoglycerate + 2 H(+). Functionally, ruBisCO catalyzes two reactions: the carboxylation of D-ribulose 1,5-bisphosphate, the primary event in carbon dioxide fixation, as well as the oxidative fragmentation of the pentose substrate in the photorespiration process. Both reactions occur simultaneously and in competition at the same active site. In Euglena myxocylindracea, this protein is Ribulose bisphosphate carboxylase large chain.